Here is a 343-residue protein sequence, read N- to C-terminus: Dihydroorotate dehydrogenase (quinone) (343 aa).

FMN is bound by residues 61–65 (AGLDK) and threonine 85. Lysine 65 is a binding site for substrate. 110–114 (NRMGF) lines the substrate pocket. FMN is bound by residues asparagine 138 and asparagine 171. Substrate is bound at residue asparagine 171. Residue serine 174 is the Nucleophile of the active site. A substrate-binding site is contributed by asparagine 176. FMN contacts are provided by lysine 216 and threonine 244. Position 245–246 (245–246 (NT)) interacts with substrate. FMN contacts are provided by residues glycine 267, glycine 296, and 317–318 (YS).

Belongs to the dihydroorotate dehydrogenase family. Type 2 subfamily. In terms of assembly, monomer. FMN is required as a cofactor.

The protein localises to the cell membrane. The catalysed reaction is (S)-dihydroorotate + a quinone = orotate + a quinol. It functions in the pathway pyrimidine metabolism; UMP biosynthesis via de novo pathway; orotate from (S)-dihydroorotate (quinone route): step 1/1. Its function is as follows. Catalyzes the conversion of dihydroorotate to orotate with quinone as electron acceptor. In Pseudomonas savastanoi pv. phaseolicola (strain 1448A / Race 6) (Pseudomonas syringae pv. phaseolicola (strain 1448A / Race 6)), this protein is Dihydroorotate dehydrogenase (quinone).